Consider the following 102-residue polypeptide: Small ribosomal subunit protein uS10 (102 aa).

Belongs to the universal ribosomal protein uS10 family. Part of the 30S ribosomal subunit.

In terms of biological role, involved in the binding of tRNA to the ribosomes. The polypeptide is Small ribosomal subunit protein uS10 (Frankia alni (strain DSM 45986 / CECT 9034 / ACN14a)).